An 804-amino-acid chain; its full sequence is MKISVNWLKDFLPSFSPDITSLVEKLTFLGLEVEDVESTPLPDLRVVVGRVQSVALHPDADRLRICMVDTGLEEPLQIVCGAPNVAEGMLVPVATEGSRLTMQDGTSFVIKPSKIRGQRSFGMICAADELGLSADHSGVMELDSSYAVGEPFARYLDSDTVLDIAVTPNRPDVLSHLGIARELGSAPDAILFPEEAPLEFSADSPLVQVMDSGACPLYVGVIIRGVTVGPSPRWLSARLESIGLRPKNNIVDITNFILHALGQPLHAFDLQKLKGGRVIVRSDFSGSFTTLGAEQCTVEPGMPVICDTQMPVALAGVMGGLDSAVGEGTVDILLEAACFAPSAVRRSARKAGISSDSSYRFERGIDIRNVLPAARAAVALILETAGGTVGEATLQGDPSPALLVLPFRPRRANELLGTAIETDAMQAMLARIGFRTLALDEGVMQVEVPSCRIDVLQEIDLIEEVARLHGYDNIEASGRLAATYPASRTRPGYFPDFLRGVAVGLDFREVLTNPLIRREEAAPFGDGLVSVLNPISEGLEVLRPGLVPGMLKVIAHNIRHGNRDMRLFEVAHGFSVADPSGAAEQGPLGAYCEKEWLVLALTGNRYPRSWNQPPDRVDFYDAVGAAEMLLGKLNLLDKSAVNIYNENTVSIDLELTEGKKKRSQRAGRAMRLDSALLSQFGIEQDVFTVELDVSVLEMLYSPDVVYDPPSKFPAVQRDLSFILPGTVPVQSLVGLVRSSDPLIRDVSVFDVFERGSGGGGERSVGLSISIADHSGTLQEGRISEILRTVGVNAESKLGAVIRQV.

In terms of domain architecture, tRNA-binding spans 40–153; that stretch reads PLPDLRVVVG…SSYAVGEPFA (114 aa). The B5 domain maps to 400 to 476; the sequence is PALLVLPFRP…RLHGYDNIEA (77 aa). D454, D460, E463, and E464 together coordinate Mg(2+). Positions 710–802 constitute an FDX-ACB domain; that stretch reads SKFPAVQRDL…AESKLGAVIR (93 aa).

It belongs to the phenylalanyl-tRNA synthetase beta subunit family. Type 1 subfamily. Tetramer of two alpha and two beta subunits. The cofactor is Mg(2+).

It localises to the cytoplasm. The catalysed reaction is tRNA(Phe) + L-phenylalanine + ATP = L-phenylalanyl-tRNA(Phe) + AMP + diphosphate + H(+). The chain is Phenylalanine--tRNA ligase beta subunit from Chlorobium luteolum (strain DSM 273 / BCRC 81028 / 2530) (Pelodictyon luteolum).